Here is a 105-residue protein sequence, read N- to C-terminus: MFNRVLIQSTNLDVGWVQEDSNRSTEGLGWQIVSEGGSNDTRVTVSSGNLTPHNSNLRTPDFLGGSVDVGNTLTQVKLSILWSSDTFDLDQRDIWVVDSLGSLVG.

This is an uncharacterized protein from Saccharomyces cerevisiae (strain ATCC 204508 / S288c) (Baker's yeast).